The sequence spans 437 residues: Enolase (437 aa).

Q166 lines the (2R)-2-phosphoglycerate pocket. Catalysis depends on E208, which acts as the Proton donor. The Mg(2+) site is built by D245, E295, and D322. (2R)-2-phosphoglycerate-binding residues include K347, R376, S377, and K398. Catalysis depends on K347, which acts as the Proton acceptor.

Belongs to the enolase family. Mg(2+) serves as cofactor.

It localises to the cytoplasm. The protein localises to the secreted. The protein resides in the cell surface. It catalyses the reaction (2R)-2-phosphoglycerate = phosphoenolpyruvate + H2O. The protein operates within carbohydrate degradation; glycolysis; pyruvate from D-glyceraldehyde 3-phosphate: step 4/5. Functionally, catalyzes the reversible conversion of 2-phosphoglycerate (2-PG) into phosphoenolpyruvate (PEP). It is essential for the degradation of carbohydrates via glycolysis. This is Enolase from Lachnoclostridium phytofermentans (strain ATCC 700394 / DSM 18823 / ISDg) (Clostridium phytofermentans).